Here is a 390-residue protein sequence, read N- to C-terminus: Magnesium-protoporphyrin IX monomethyl ester [oxidative] cyclase (390 aa).

This sequence belongs to the AcsF family. Fe cation is required as a cofactor.

The catalysed reaction is Mg-protoporphyrin IX 13-monomethyl ester + 3 NADPH + 3 O2 + 2 H(+) = 3,8-divinyl protochlorophyllide a + 3 NADP(+) + 5 H2O. It participates in porphyrin-containing compound metabolism; chlorophyll biosynthesis (light-independent). Its function is as follows. Catalyzes the formation of the isocyclic ring in chlorophyll biosynthesis. Mediates the cyclase reaction, which results in the formation of divinylprotochlorophyllide (Pchlide) characteristic of all chlorophylls from magnesium-protoporphyrin IX 13-monomethyl ester (MgPMME). The polypeptide is Magnesium-protoporphyrin IX monomethyl ester [oxidative] cyclase (Prochlorococcus marinus (strain MIT 9215)).